Reading from the N-terminus, the 268-residue chain is Tryptophan synthase alpha chain (268 aa).

Residues E49 and D60 each act as proton acceptor in the active site.

Belongs to the TrpA family. Tetramer of two alpha and two beta chains.

The catalysed reaction is (1S,2R)-1-C-(indol-3-yl)glycerol 3-phosphate + L-serine = D-glyceraldehyde 3-phosphate + L-tryptophan + H2O. It participates in amino-acid biosynthesis; L-tryptophan biosynthesis; L-tryptophan from chorismate: step 5/5. In terms of biological role, the alpha subunit is responsible for the aldol cleavage of indoleglycerol phosphate to indole and glyceraldehyde 3-phosphate. The chain is Tryptophan synthase alpha chain from Sodalis glossinidius (strain morsitans).